Here is a 175-residue protein sequence, read N- to C-terminus: Arsenite oxidase subunit AioB (175 aa).

The tat-type signal signal peptide spans 1–32 (MSDTINLTRRGFLKVSGSGVAVAATLSPIASA). The region spanning 62–158 (NEPVSFTYPD…LRYDEASDAL (97 aa)) is the Rieske domain. The [2Fe-2S] cluster site is built by C102, H104, C120, and H123. A disulfide bridge links C107 with C122.

Belongs to the AOX family. As to quaternary structure, heterodimer consisting of a large and a small subunit. [2Fe-2S] cluster is required as a cofactor. Predicted to be exported by the Tat system. The position of the signal peptide cleavage has not been experimentally proven.

The catalysed reaction is 2 oxidized [azurin] + arsenite + H2O = 2 reduced [azurin] + arsenate + 3 H(+). Involved in the detoxification of arsenic. Oxidizes As(III)O3(3-) (arsenite) to the somewhat less toxic As(V)O4(3-) (arsenate). This chain is Arsenite oxidase subunit AioB (aioB), found in Alcaligenes faecalis.